The sequence spans 404 residues: Serpin-Z2B (404 aa).

The tract at residues 349-373 is RCL; that stretch reads GTEAAAATACTMKFLCLTLTSPVDF.

Belongs to the serpin family.

In terms of biological role, probable serine protease inhibitor. The protein is Serpin-Z2B of Oryza sativa subsp. japonica (Rice).